We begin with the raw amino-acid sequence, 158 residues long: Transcription elongation factor GreA (158 aa).

Positions 10 to 75 form a coiled coil; that stretch reads TKEGKEKLEQ…QMLENMIRNA (66 aa).

It belongs to the GreA/GreB family.

In terms of biological role, necessary for efficient RNA polymerase transcription elongation past template-encoded arresting sites. The arresting sites in DNA have the property of trapping a certain fraction of elongating RNA polymerases that pass through, resulting in locked ternary complexes. Cleavage of the nascent transcript by cleavage factors such as GreA or GreB allows the resumption of elongation from the new 3'terminus. GreA releases sequences of 2 to 3 nucleotides. The chain is Transcription elongation factor GreA from Geobacillus kaustophilus (strain HTA426).